The sequence spans 139 residues: Large ribosomal subunit protein uL16c (139 aa).

The protein belongs to the universal ribosomal protein uL16 family. Part of the 50S ribosomal subunit.

It localises to the plastid. Its subcellular location is the chloroplast. This is Large ribosomal subunit protein uL16c from Cicer arietinum (Chickpea).